The sequence spans 318 residues: Biotin synthase (318 aa).

In terms of domain architecture, Radical SAM core spans Asp40–Leu260. 3 residues coordinate [4Fe-4S] cluster: Cys55, Cys59, and Cys62. Cys100, Cys132, Cys192, and Arg264 together coordinate [2Fe-2S] cluster.

The protein belongs to the radical SAM superfamily. Biotin synthase family. Homodimer. [4Fe-4S] cluster is required as a cofactor. The cofactor is [2Fe-2S] cluster.

It carries out the reaction (4R,5S)-dethiobiotin + (sulfur carrier)-SH + 2 reduced [2Fe-2S]-[ferredoxin] + 2 S-adenosyl-L-methionine = (sulfur carrier)-H + biotin + 2 5'-deoxyadenosine + 2 L-methionine + 2 oxidized [2Fe-2S]-[ferredoxin]. It functions in the pathway cofactor biosynthesis; biotin biosynthesis; biotin from 7,8-diaminononanoate: step 2/2. Catalyzes the conversion of dethiobiotin (DTB) to biotin by the insertion of a sulfur atom into dethiobiotin via a radical-based mechanism. This chain is Biotin synthase, found in Ruegeria pomeroyi (strain ATCC 700808 / DSM 15171 / DSS-3) (Silicibacter pomeroyi).